We begin with the raw amino-acid sequence, 462 residues long: A-type ATP synthase subunit B (462 aa).

Belongs to the ATPase alpha/beta chains family. In terms of assembly, has multiple subunits with at least A(3), B(3), C, D, E, F, H, I and proteolipid K(x).

Its subcellular location is the cell membrane. In terms of biological role, component of the A-type ATP synthase that produces ATP from ADP in the presence of a proton gradient across the membrane. The B chain is a regulatory subunit. The protein is A-type ATP synthase subunit B of Methanobrevibacter smithii (strain ATCC 35061 / DSM 861 / OCM 144 / PS).